The sequence spans 80 residues: Mu-conotoxin BuIIIC (80 aa).

A signal peptide spans 1–22; the sequence is MMSKLGVLLTICLLLFPLFALP. Residues 23–51 constitute a propeptide that is removed on maturation; sequence QDGDQPADRPAERMQDDLSSEQHPLFEKR. Disulfide bonds link cysteine 56–cysteine 70, cysteine 57–cysteine 76, and cysteine 66–cysteine 77. A Cysteine amide modification is found at cysteine 77.

It belongs to the conotoxin M superfamily. Expressed by the venom duct.

It is found in the secreted. Mu-conotoxins block voltage-gated sodium channels. Extremely potent inhibitor of Nav1.4/SCN4A (96% inhibition at 1 uM). The inhibition is very slowly reversible. The protein is Mu-conotoxin BuIIIC of Conus bullatus (Bubble cone).